The following is a 123-amino-acid chain: MAPTGQVAKKGSKKAVKPPRASGGKKRHRKRKESYGIYIYKVLKQVHPDTGVSSRAMTIMNSFVNDIFERIAGEASRLTQYNKKSTISSREIQTAVRLLLPGELAKHAVSEGTKAVTKYTTAK.

The tract at residues Met1–Lys32 is disordered. Residues Lys10–Lys32 show a composition bias toward basic residues. The O-linked (GlcNAc) serine glycan is linked to Ser110. A Glycyl lysine isopeptide (Lys-Gly) (interchain with G-Cter in ubiquitin) cross-link involves residue Lys118.

This sequence belongs to the histone H2B family. The nucleosome is a histone octamer containing two molecules each of H2A, H2B, H3 and H4 assembled in one H3-H4 heterotetramer and two H2A-H2B heterodimers. The octamer wraps approximately 147 bp of DNA. Post-translationally, monoubiquitination of Lys-118 gives a specific tag for epigenetic transcriptional activation and is also prerequisite for histone H3 'Lys-4' and 'Lys-79' methylation. GlcNAcylation at Ser-110 promotes monoubiquitination of Lys-118. It fluctuates in response to extracellular glucose, and associates with transcribed genes.

Its subcellular location is the nucleus. It is found in the chromosome. Core component of nucleosome. Nucleosomes wrap and compact DNA into chromatin, limiting DNA accessibility to the cellular machineries which require DNA as a template. Histones thereby play a central role in transcription regulation, DNA repair, DNA replication and chromosomal stability. DNA accessibility is regulated via a complex set of post-translational modifications of histones, also called histone code, and nucleosome remodeling. The chain is Histone H2B.1, embryonic from Psammechinus miliaris (Green sea urchin).